The primary structure comprises 281 residues: Undecaprenyl-diphosphatase (281 aa).

8 helical membrane-spanning segments follow: residues 2-22 (FDLI…FLPV), 46-66 (AFSS…VIQL), 93-113 (VIVG…FMDA), 115-135 (LMNF…FIVI), 152-172 (ITFK…VPGT), 190-210 (FVAA…VTFL), 228-248 (IVML…IKFM), and 259-279 (VFGY…ILGI).

This sequence belongs to the UppP family.

Its subcellular location is the cell membrane. The enzyme catalyses di-trans,octa-cis-undecaprenyl diphosphate + H2O = di-trans,octa-cis-undecaprenyl phosphate + phosphate + H(+). Functionally, catalyzes the dephosphorylation of undecaprenyl diphosphate (UPP). Confers resistance to bacitracin. This chain is Undecaprenyl-diphosphatase, found in Leuconostoc mesenteroides subsp. mesenteroides (strain ATCC 8293 / DSM 20343 / BCRC 11652 / CCM 1803 / JCM 6124 / NCDO 523 / NBRC 100496 / NCIMB 8023 / NCTC 12954 / NRRL B-1118 / 37Y).